The sequence spans 292 residues: Proteasome subunit beta 2 (292 aa).

The propeptide at 1 to 59 (MTVDRAPRITDGDTRLSFGSNLSSFSEYLRVHAPEHLPQNRFADTGGVVMGGGDVAPHG) is removed in mature form; by autocatalysis. The Nucleophile role is filled by Thr60.

Belongs to the peptidase T1B family. In terms of assembly, the 20S proteasome core is composed of 14 alpha and 14 beta subunits that assemble into four stacked heptameric rings, resulting in a barrel-shaped structure. The two inner rings, each composed of seven catalytic beta subunits, are sandwiched by two outer rings, each composed of seven alpha subunits. All four combinations of alpha- and beta-subunits (beta2-alpha1, beta2-alpha2, beta1-alpha2 and beta1-alpha1) yield fully assembled and proteolytically active proteasomes. The catalytic chamber with the active sites is on the inside of the barrel. Has probably a gated structure, the ends of the cylinder being occluded by the N-termini of the alpha-subunits. Is likely capped by the proteasome-associated ATPase, ARC.

The protein resides in the cytoplasm. It catalyses the reaction Cleavage of peptide bonds with very broad specificity.. It participates in protein degradation; proteasomal Pup-dependent pathway. Its activity is regulated as follows. The formation of the proteasomal ATPase ARC-20S proteasome complex, likely via the docking of the C-termini of ARC into the intersubunit pockets in the alpha-rings, may trigger opening of the gate for substrate entry. Interconversion between the open-gate and close-gate conformations leads to a dynamic regulation of the 20S proteasome proteolysis activity. Component of the proteasome core, a large protease complex with broad specificity involved in protein degradation. The R.erythropolis proteasomes are able to cleave oligopeptides after Tyr, Phe and Leu, very poorly after Arg but not after Glu. Thus, displays chymotrypsin-like activity, low trypsin-like activity but no caspase-like activity. The protein is Proteasome subunit beta 2 of Rhodococcus erythropolis (Arthrobacter picolinophilus).